The primary structure comprises 243 residues: UPF0502 protein RALTA_B0914 (243 aa).

Over residues 1 to 10 the composition is skewed to polar residues; sequence MPSTPESDPT. The interval 1–23 is disordered; that stretch reads MPSTPESDPTQPGDRPARPALRP.

This sequence belongs to the UPF0502 family.

The chain is UPF0502 protein RALTA_B0914 from Cupriavidus taiwanensis (strain DSM 17343 / BCRC 17206 / CCUG 44338 / CIP 107171 / LMG 19424 / R1) (Ralstonia taiwanensis (strain LMG 19424)).